Reading from the N-terminus, the 589-residue chain is V-type ATP synthase alpha chain (589 aa).

239 to 246 (GPFGAGKT) lines the ATP pocket.

Belongs to the ATPase alpha/beta chains family.

The enzyme catalyses ATP + H2O + 4 H(+)(in) = ADP + phosphate + 5 H(+)(out). Its function is as follows. Produces ATP from ADP in the presence of a proton gradient across the membrane. The V-type alpha chain is a catalytic subunit. The chain is V-type ATP synthase alpha chain from Treponema denticola (strain ATCC 35405 / DSM 14222 / CIP 103919 / JCM 8153 / KCTC 15104).